The following is a 455-amino-acid chain: Cysteinylglycine-S-conjugate dipeptidase (455 aa).

His-92 contributes to the Zn(2+) binding site. Asp-94 is a catalytic residue. Asp-125 provides a ligand contact to Zn(2+). Catalysis depends on Glu-158, which acts as the Proton acceptor. Zn(2+) is bound by residues Glu-159, Glu-163, and His-428.

This sequence belongs to the peptidase M20F family. Zn(2+) is required as a cofactor.

The catalysed reaction is an S-substituted L-cysteinylglycine + H2O = an S-substituted L-cysteine + glycine. It carries out the reaction S-(1-hydroxy-3-methylhexan-3-yl)-L-cysteinylglycine + H2O = S-(1-hydroxy-3-methylhexan-3-yl)-L-cysteine + glycine. It catalyses the reaction S-benzyl-L-cysteinylglycine + H2O = S-benzyl-L-cysteine + glycine. Functionally, metallopeptidase that hydrolyzes the Cys-Gly bond of Cys-Gly-S-conjugates. Involved in the formation of the human body odorant 3-methyl-3-sulfanylhexan-1-ol (3M3SH) from odorless axilla secretions. Catalyzes the hydrolysis of the Cys-Gly bond of the Cys-Gly-S-conjugate of 3M3SH, a key precursor secreted by apocrine glands in human axilla skin. The Cys-S-conjugate obtained is then cleaved by the Cys-S-conjugate beta-lyase MetC, which finally releases 3M3SH. This chain is Cysteinylglycine-S-conjugate dipeptidase, found in Corynebacterium striatum.